The primary structure comprises 352 residues: Zinc finger CCCH domain-containing protein 42 (352 aa).

An RRM domain is found at 36–114 (AYVYVGGIPF…RTIKVDHCGA (79 aa)). 2 C3H1-type zinc fingers span residues 130 to 157 (REAR…HDEK) and 180 to 207 (REGR…HDEK). A disordered region spans residues 156 to 179 (EKRAANTGWGHEEDRSSKWDHDKN). Composition is skewed to basic and acidic residues over residues 210–230 (ATTG…DKLN), 243–296 (GDFK…RSGR), and 304–352 (RHND…DRRR). The disordered stretch occupies residues 210 to 352 (ATTGWGHEED…DSLRREDRRR (143 aa)). Residues 319 to 348 (RAQDWEKRKAESRRDRNDREEKDRDSLRRE) are a coiled coil.

The polypeptide is Zinc finger CCCH domain-containing protein 42 (Arabidopsis thaliana (Mouse-ear cress)).